We begin with the raw amino-acid sequence, 231 residues long: Transcriptional regulatory protein KdpE (231 aa).

The 114-residue stretch at 4–117 (KILIIEDDHA…ELRARIRVIE (114 aa)) folds into the Response regulatory domain. D53 carries the 4-aspartylphosphate modification. Positions 127–227 (NIVFTNGLLS…HPRIGYQMLQ (101 aa)) form a DNA-binding region, ompR/PhoB-type.

Phosphorylated by KdpD. Phosphorylation is required for transcriptional activity.

In terms of biological role, member of the two-component regulatory system KdpD/KdpE that regulates the transcription of a series of virulence factors through sensing external K(+) concentrations. Also regulates capsular polysaccharide synthesis. Upon phosphorylation by KpdD, functions as a transcriptional regulator by direct binding to promoter regions of target genes including spa, hla, aur and geh. Represses the transcription of kdpFABC operon. This is Transcriptional regulatory protein KdpE from Staphylococcus aureus (strain NCTC 8325 / PS 47).